The chain runs to 268 residues: Hemolysin C (268 aa).

2 consecutive CBS domains span residues 52–111 (MVPR…NFSL) and 114–171 (ILHK…IRDE).

The protein belongs to the UPF0053 family.

Functionally, bacterial hemolysins are exotoxins that attack blood cell membranes and cause cell rupture by mechanisms not clearly defined. In Brachyspira hyodysenteriae (Treponema hyodysenteriae), this protein is Hemolysin C (tlyC).